The primary structure comprises 730 residues: Guanylate cyclase soluble subunit alpha-2 (730 aa).

The tract at residues 1-53 (MSRRKISSESFSSLGSDYLETSPEEEGECPLSKLCWNGSRSPPGPPGSRAAAM) is disordered. Residues 519 to 646 (TMLFSDIVGF…NNVTLASKFE (128 aa)) form the Guanylate cyclase domain.

Belongs to the adenylyl cyclase class-4/guanylyl cyclase family. Heterodimer of an alpha and a beta chain.

It is found in the cytoplasm. The catalysed reaction is GTP = 3',5'-cyclic GMP + diphosphate. Its activity is regulated as follows. Activated by nitric oxide in the presence of magnesium or manganese ions. Its function is as follows. Has guanylyl cyclase on binding to the beta-1 subunit. In Rattus norvegicus (Rat), this protein is Guanylate cyclase soluble subunit alpha-2 (Gucy1a2).